A 908-amino-acid chain; its full sequence is Probable serine/threonine-protein kinase DDB_G0278521 (908 aa).

Over 1-153 the chain is Extracellular; that stretch reads MSNNKIIESL…RGEKLSTLDR (153 aa). The chain crosses the membrane as a helical span at residues 154 to 174; it reads IICFSIIYSQDQILLFLLNFI. At 175–908 the chain is on the cytoplasmic side; sequence LSNINCNNNN…SDQNDSDLYD (734 aa). ANK repeat units lie at residues 258 to 289, 300 to 326, 330 to 361, 362 to 391, and 395 to 424; these read LKVY…NVYN, TNRS…NIHD, KGML…ALDQ, SNNT…RLSI, and NGRY…KMNS. The segment covering 461-472 has biased composition (low complexity); the sequence is NSNNLTNSNSSS. Residues 461 to 491 are disordered; that stretch reads NSNNLTNSNSSSVGGLRISNGGNTQQQSIQI. Over residues 480-490 the composition is skewed to polar residues; it reads NGGNTQQQSIQ. Residues 495-524 form an ANK 6 repeat; sequence ENNTPIDLLVLNNHFTIAIELLKYEGYIVG. One can recognise a Protein kinase domain in the interval 530–817; sequence FKTARKIGAG…LPIANIPKFL (288 aa). Residues 536-544 and lysine 557 contribute to the ATP site; that span reads IGAGAFGDV. The active-site Proton acceptor is aspartate 677.

Belongs to the protein kinase superfamily. TKL Ser/Thr protein kinase family.

The protein resides in the membrane. It carries out the reaction L-seryl-[protein] + ATP = O-phospho-L-seryl-[protein] + ADP + H(+). It catalyses the reaction L-threonyl-[protein] + ATP = O-phospho-L-threonyl-[protein] + ADP + H(+). The protein is Probable serine/threonine-protein kinase DDB_G0278521 of Dictyostelium discoideum (Social amoeba).